We begin with the raw amino-acid sequence, 489 residues long: NADH-ubiquinone oxidoreductase chain 2 (489 aa).

13 helical membrane-spanning segments follow: residues 9-29 (LFPEIFLINATIILLIYGVVF), 47-67 (LGLLSVLITILLVAVGSPLAV), 80-100 (FTYFCQIFLLLSTASTMVMCL), 114-134 (IVLILLSTCSMLFMISAYDLI), 168-188 (FILGAFSSGILLFGCSMIYGF), 216-236 (IFMGILFIAVGFLFKITAVPF), 248-268 (PTIVTAFFSIAPKISILANML), 280-300 (WQQLFFFCSIASMILGALAAM), 309-329 (LAYSSIGHVGYLLIGFSCGTI), 335-355 (LLIGIFIYVLMTVNVFAIVLA), 376-396 (ILAITLSITMFSYAGIPPLAG), 401-421 (FYLFFAALGCGAYLLALIGVV), and 459-479 (LAITVFFITFFFLYPSPLFLV).

It belongs to the complex I subunit 2 family.

The protein localises to the mitochondrion inner membrane. It catalyses the reaction a ubiquinone + NADH + 5 H(+)(in) = a ubiquinol + NAD(+) + 4 H(+)(out). In terms of biological role, core subunit of the mitochondrial membrane respiratory chain NADH dehydrogenase (Complex I) that is believed to belong to the minimal assembly required for catalysis. Complex I functions in the transfer of electrons from NADH to the respiratory chain. The immediate electron acceptor for the enzyme is believed to be ubiquinone. The sequence is that of NADH-ubiquinone oxidoreductase chain 2 (ND2) from Marchantia polymorpha (Common liverwort).